Consider the following 1323-residue polypeptide: PH domain leucine-rich repeat-containing protein phosphatase 2 (1323 aa).

The PH domain maps to 150-248 (RILLSGIYNV…WQRQASKVVS (99 aa)). LRR repeat units follow at residues 250–271 (RIST…LFYS), 273–296 (DITY…DTLY), 300–321 (QLKG…LCEI), 323–344 (TLTE…IGNL), 346–368 (NLQT…GNLQ), 369–390 (QLSS…YEKL), 392–412 (MLDR…GVLN), 416–439 (HIKH…EGNK), 440–460 (HITH…SSLC), 461–480 (SLEQ…LSGF), 481–502 (SLRT…PVPS), 503–524 (LLTF…ACEA), 526–547 (KIEV…ILSS), 549–570 (SLRK…VEHI), 571–592 (PLEV…LFSK), 595–616 (NLRY…CTGE), 621–644 (MLQL…VGHL), 645–666 (HLRI…KLNK), 669–690 (QLEE…IANC), 692–713 (RLHT…LQLP), 714–735 (QIQF…EALP), and 737–758 (TLQD…TLDI). A PPM-type phosphatase domain is found at 785 to 1033 (SHGLAEMAGQ…DNVGAMVVYL (249 aa)). Residues Asp820, Gly821, Lys985, and Asp1024 each coordinate Mn(2+). The interval 1060 to 1157 (TIKDAPKPAT…DSDDDQPVEG (98 aa)) is disordered. Over residues 1071–1097 (SSSSGIASEFSSEMSTSEVSSEVGSTA) the composition is skewed to low complexity. Polar residues predominate over residues 1122 to 1146 (PTPTSGLFQRQPSSATFSSNQSDNG). Residue Ser1210 is modified to Phosphoserine. A disordered region spans residues 1285–1323 (HDLEEEVKEQMKQHQDSRLEPEPHEEDRTEPPEEFDTAL). Over residues 1292-1315 (KEQMKQHQDSRLEPEPHEEDRTEP) the composition is skewed to basic and acidic residues.

Interacts with AKT1, AKT3 and PRKCB isoform beta-II. Interacts with STK4, RPS6KB1, RAF1. Interacts with FKBP5; FKBP5 acts as a scaffold for PHLPP2 and Akt. Interacts with NHERF1; NHERF1 scaffolds a heterotrimeric complex with PTEN. The cofactor is Mn(2+). As to expression, in colorectal cancer tissue, expression is highest in the surface epithelium of normal colonic mucosa adjacent to the cancer tissue but is largely excluded from the crypt bases. Expression is lost or significantly decreased in 80% of tested tumors (at protein level).

The protein localises to the cytoplasm. Its subcellular location is the membrane. The protein resides in the nucleus. The enzyme catalyses O-phospho-L-seryl-[protein] + H2O = L-seryl-[protein] + phosphate. It carries out the reaction O-phospho-L-threonyl-[protein] + H2O = L-threonyl-[protein] + phosphate. Its activity is regulated as follows. Inhibited by AKT1, AKT2 and AKT3. Activated by oleic acid and arachidonic acid. Functionally, protein phosphatase involved in regulation of Akt and PKC signaling. Mediates dephosphorylation in the C-terminal domain hydrophobic motif of members of the AGC Ser/Thr protein kinase family; specifically acts on 'Ser-473' of AKT1, 'Ser-660' of PRKCB isoform beta-II and 'Ser-657' of PRKCA. Akt regulates the balance between cell survival and apoptosis through a cascade that primarily alters the function of transcription factors that regulate pro- and antiapoptotic genes. Dephosphorylation of 'Ser-473' of Akt triggers apoptosis and decreases cell proliferation. Also controls the phosphorylation of AKT3. Dephosphorylates STK4 on 'Thr-387' leading to STK4 activation and apoptosis. Dephosphorylates RPS6KB1 and is involved in regulation of cap-dependent translation. Inhibits cancer cell proliferation and may act as a tumor suppressor. Dephosphorylation of PRKCA and PRKCB leads to their destabilization and degradation. Dephosphorylates RAF1 inhibiting its kinase activity. The polypeptide is PH domain leucine-rich repeat-containing protein phosphatase 2 (PHLPP2) (Homo sapiens (Human)).